A 90-amino-acid chain; its full sequence is Putative defensin-like protein 243 (90 aa).

Residues 1-19 form the signal peptide; sequence MKVEVIFLASCVLFSLIHA. Cystine bridges form between Cys33/Cys88, Cys43/Cys72, Cys53/Cys82, and Cys70/Cys84.

Belongs to the DEFL family.

It is found in the secreted. The polypeptide is Putative defensin-like protein 243 (SCRL9) (Arabidopsis thaliana (Mouse-ear cress)).